We begin with the raw amino-acid sequence, 468 residues long: ATP synthase subunit beta 3 (468 aa).

An ATP-binding site is contributed by 155-162 (GGAGVGKT).

The protein belongs to the ATPase alpha/beta chains family. F-type ATPases have 2 components, CF(1) - the catalytic core - and CF(0) - the membrane proton channel. CF(1) has five subunits: alpha(3), beta(3), gamma(1), delta(1), epsilon(1). CF(0) has three main subunits: a(1), b(2) and c(9-12). The alpha and beta chains form an alternating ring which encloses part of the gamma chain. CF(1) is attached to CF(0) by a central stalk formed by the gamma and epsilon chains, while a peripheral stalk is formed by the delta and b chains.

It is found in the cell inner membrane. The enzyme catalyses ATP + H2O + 4 H(+)(in) = ADP + phosphate + 5 H(+)(out). Produces ATP from ADP in the presence of a proton gradient across the membrane. The catalytic sites are hosted primarily by the beta subunits. The protein is ATP synthase subunit beta 3 of Syntrophotalea carbinolica (strain DSM 2380 / NBRC 103641 / GraBd1) (Pelobacter carbinolicus).